We begin with the raw amino-acid sequence, 620 residues long: 1-deoxy-D-xylulose-5-phosphate synthase (620 aa).

Residues histidine 80 and 121–123 each bind thiamine diphosphate; that span reads GHS. Aspartate 152 provides a ligand contact to Mg(2+). Thiamine diphosphate is bound by residues 153–154, asparagine 181, tyrosine 288, and glutamate 370; that span reads GA. Asparagine 181 serves as a coordination point for Mg(2+).

This sequence belongs to the transketolase family. DXPS subfamily. In terms of assembly, homodimer. Mg(2+) serves as cofactor. Requires thiamine diphosphate as cofactor.

The enzyme catalyses D-glyceraldehyde 3-phosphate + pyruvate + H(+) = 1-deoxy-D-xylulose 5-phosphate + CO2. It functions in the pathway metabolic intermediate biosynthesis; 1-deoxy-D-xylulose 5-phosphate biosynthesis; 1-deoxy-D-xylulose 5-phosphate from D-glyceraldehyde 3-phosphate and pyruvate: step 1/1. Catalyzes the acyloin condensation reaction between C atoms 2 and 3 of pyruvate and glyceraldehyde 3-phosphate to yield 1-deoxy-D-xylulose-5-phosphate (DXP). This chain is 1-deoxy-D-xylulose-5-phosphate synthase, found in Escherichia coli O139:H28 (strain E24377A / ETEC).